Consider the following 474-residue polypeptide: tRNA-2-methylthio-N(6)-dimethylallyladenosine synthase (474 aa).

Residues 3 to 120 (KKLHIKTWGC…LPEMINSVRG (118 aa)) enclose the MTTase N-terminal domain. [4Fe-4S] cluster-binding residues include cysteine 12, cysteine 49, cysteine 83, cysteine 157, cysteine 161, and cysteine 164. In terms of domain architecture, Radical SAM core spans 143–378 (RADGPSAFVS…INQQVTAWSR (236 aa)). Residues 378-441 (RRMLGTTQRI…TNSMRGKVVR (64 aa)) enclose the TRAM domain.

This sequence belongs to the methylthiotransferase family. MiaB subfamily. Monomer. The cofactor is [4Fe-4S] cluster.

It localises to the cytoplasm. It catalyses the reaction N(6)-dimethylallyladenosine(37) in tRNA + (sulfur carrier)-SH + AH2 + 2 S-adenosyl-L-methionine = 2-methylsulfanyl-N(6)-dimethylallyladenosine(37) in tRNA + (sulfur carrier)-H + 5'-deoxyadenosine + L-methionine + A + S-adenosyl-L-homocysteine + 2 H(+). Catalyzes the methylthiolation of N6-(dimethylallyl)adenosine (i(6)A), leading to the formation of 2-methylthio-N6-(dimethylallyl)adenosine (ms(2)i(6)A) at position 37 in tRNAs that read codons beginning with uridine. This Enterobacter sp. (strain 638) protein is tRNA-2-methylthio-N(6)-dimethylallyladenosine synthase.